Here is a 286-residue protein sequence, read N- to C-terminus: Probable endonuclease 4 (286 aa).

Zn(2+)-binding residues include His71, His111, Glu147, Asp181, His184, His218, Asp231, His233, and Glu263.

It belongs to the AP endonuclease 2 family. Zn(2+) serves as cofactor.

It carries out the reaction Endonucleolytic cleavage to 5'-phosphooligonucleotide end-products.. Endonuclease IV plays a role in DNA repair. It cleaves phosphodiester bonds at apurinic or apyrimidinic (AP) sites, generating a 3'-hydroxyl group and a 5'-terminal sugar phosphate. The polypeptide is Probable endonuclease 4 (Vibrio cholerae serotype O1 (strain ATCC 39541 / Classical Ogawa 395 / O395)).